The sequence spans 289 residues: ATP synthase gamma chain (289 aa).

The protein belongs to the ATPase gamma chain family. F-type ATPases have 2 components, CF(1) - the catalytic core - and CF(0) - the membrane proton channel. CF(1) has five subunits: alpha(3), beta(3), gamma(1), delta(1), epsilon(1). CF(0) has three main subunits: a, b and c.

Its subcellular location is the cell inner membrane. Produces ATP from ADP in the presence of a proton gradient across the membrane. The gamma chain is believed to be important in regulating ATPase activity and the flow of protons through the CF(0) complex. This is ATP synthase gamma chain from Halorhodospira halophila (strain DSM 244 / SL1) (Ectothiorhodospira halophila (strain DSM 244 / SL1)).